Consider the following 259-residue polypeptide: Imidazole glycerol phosphate synthase subunit HisF (259 aa).

Catalysis depends on residues D11 and D130.

Belongs to the HisA/HisF family. Heterodimer of HisH and HisF.

Its subcellular location is the cytoplasm. The catalysed reaction is 5-[(5-phospho-1-deoxy-D-ribulos-1-ylimino)methylamino]-1-(5-phospho-beta-D-ribosyl)imidazole-4-carboxamide + L-glutamine = D-erythro-1-(imidazol-4-yl)glycerol 3-phosphate + 5-amino-1-(5-phospho-beta-D-ribosyl)imidazole-4-carboxamide + L-glutamate + H(+). Its pathway is amino-acid biosynthesis; L-histidine biosynthesis; L-histidine from 5-phospho-alpha-D-ribose 1-diphosphate: step 5/9. In terms of biological role, IGPS catalyzes the conversion of PRFAR and glutamine to IGP, AICAR and glutamate. The HisF subunit catalyzes the cyclization activity that produces IGP and AICAR from PRFAR using the ammonia provided by the HisH subunit. The polypeptide is Imidazole glycerol phosphate synthase subunit HisF (Carboxydothermus hydrogenoformans (strain ATCC BAA-161 / DSM 6008 / Z-2901)).